We begin with the raw amino-acid sequence, 182 residues long: Hypoxanthine/guanine phosphoribosyltransferase (182 aa).

The protein belongs to the purine/pyrimidine phosphoribosyltransferase family. Archaeal HPRT subfamily. In terms of assembly, homodimer.

It localises to the cytoplasm. It catalyses the reaction IMP + diphosphate = hypoxanthine + 5-phospho-alpha-D-ribose 1-diphosphate. The enzyme catalyses GMP + diphosphate = guanine + 5-phospho-alpha-D-ribose 1-diphosphate. The protein operates within purine metabolism; IMP biosynthesis via salvage pathway; IMP from hypoxanthine: step 1/1. In terms of biological role, catalyzes a salvage reaction resulting in the formation of IMP that is energically less costly than de novo synthesis. The chain is Hypoxanthine/guanine phosphoribosyltransferase from Methanospirillum hungatei JF-1 (strain ATCC 27890 / DSM 864 / NBRC 100397 / JF-1).